The primary structure comprises 427 residues: Protein TIFY 6a (427 aa).

Basic and acidic residues predominate over residues 1 to 25 (MERDFLGAIGRKEEAAGKPEEHSDY). Residues 1-33 (MERDFLGAIGRKEEAAGKPEEHSDYRGGGGGAS) are disordered. Residues 196-231 (QNPKVTQMTIFYDGLVNVFDNIPVEKAQELMLLASR) enclose the Tify domain. 2 stretches are compositionally biased toward polar residues: residues 293-303 (LPKSSSSSNDS) and 317-327 (PLSQASPSQPI). Residues 293–327 (LPKSSSSSNDSAGPKSGGLPLAVTPLSQASPSQPI) are disordered. A Jas motif is present at residues 343–367 (PQARKASLARFLEKRKERVSSVAPY). A Nuclear localization signal motif is present at residues 345–352 (ARKASLAR). Residues 360–427 (RVSSVAPYPS…QEPPSTKLQI (68 aa)) are disordered. Composition is skewed to polar residues over residues 369-402 (SSKS…NNCE) and 411-427 (RNIS…KLQI).

Belongs to the TIFY/JAZ family. In terms of processing, ubiquitinated.

The protein localises to the nucleus. Its function is as follows. Repressor of jasmonate responses. In Oryza sativa subsp. indica (Rice), this protein is Protein TIFY 6a.